The chain runs to 106 residues: Small ribosomal subunit protein uS10 (106 aa).

It belongs to the universal ribosomal protein uS10 family. Part of the 30S ribosomal subunit.

Its function is as follows. Involved in the binding of tRNA to the ribosomes. In Pyrobaculum islandicum (strain DSM 4184 / JCM 9189 / GEO3), this protein is Small ribosomal subunit protein uS10.